A 273-amino-acid chain; its full sequence is Bis(5'-nucleosyl)-tetraphosphatase, symmetrical (273 aa).

It belongs to the Ap4A hydrolase family.

It catalyses the reaction P(1),P(4)-bis(5'-adenosyl) tetraphosphate + H2O = 2 ADP + 2 H(+). Functionally, hydrolyzes diadenosine 5',5'''-P1,P4-tetraphosphate to yield ADP. This is Bis(5'-nucleosyl)-tetraphosphatase, symmetrical from Aeromonas hydrophila subsp. hydrophila (strain ATCC 7966 / DSM 30187 / BCRC 13018 / CCUG 14551 / JCM 1027 / KCTC 2358 / NCIMB 9240 / NCTC 8049).